The sequence spans 455 residues: UDP-N-acetylmuramoylalanine--D-glutamate ligase (455 aa).

ATP is bound at residue 119–125 (GTNGKTT).

The protein belongs to the MurCDEF family.

It is found in the cytoplasm. It carries out the reaction UDP-N-acetyl-alpha-D-muramoyl-L-alanine + D-glutamate + ATP = UDP-N-acetyl-alpha-D-muramoyl-L-alanyl-D-glutamate + ADP + phosphate + H(+). It functions in the pathway cell wall biogenesis; peptidoglycan biosynthesis. In terms of biological role, cell wall formation. Catalyzes the addition of glutamate to the nucleotide precursor UDP-N-acetylmuramoyl-L-alanine (UMA). This is UDP-N-acetylmuramoylalanine--D-glutamate ligase from Listeria innocua serovar 6a (strain ATCC BAA-680 / CLIP 11262).